Here is a 221-residue protein sequence, read N- to C-terminus: MTLAAKLIVLVYVALCFVNESTSQDHSNIYHETLTSLHHKGEFHVKGLFQTPVQYAGDETVLDLYVKKNSGGDVKAVYCLGNKRSIMNQFTDTGTTTDGYDLWRVKIESTPEHISRMISHGPIACNLIWEKVITPAKGNVAEIKGLDLVNFNVNFPRQSTDNVVSRPSTNSQTVDKLLNDTLAKARGVPMSVSVISGICAIILVIFPIFITIANLRRVYLH.

A signal peptide spans 1 to 23; the sequence is MTLAAKLIVLVYVALCFVNESTS. 2 N-linked (GlcNAc...) asparagine; by host glycosylation sites follow: Asn19 and Asn179. Topologically, residues 24–191 are extracellular; that stretch reads QDHSNIYHET…LAKARGVPMS (168 aa). The chain crosses the membrane as a helical span at residues 192–212; sequence VSVISGICAIILVIFPIFITI. The Cytoplasmic segment spans residues 213-221; it reads ANLRRVYLH.

The protein localises to the host membrane. The polypeptide is Putative transmembrane protein ORF25 (Ostreid herpesvirus 1 (isolate France) (OsHV-1)).